The sequence spans 653 residues: Biotin biosynthesis bifunctional protein BioWF (653 aa).

Arg-278 is a binding site for substrate. 365–366 (GY) lines the pyridoxal 5'-phosphate pocket. Residue His-390 coordinates substrate. Residues Ser-436, 461-464 (DDAH), and 492-495 (TASK) contribute to the pyridoxal 5'-phosphate site. Lys-495 is modified (N6-(pyridoxal phosphate)lysine).

In the N-terminal section; belongs to the BioW family. It in the C-terminal section; belongs to the class-II pyridoxal-phosphate-dependent aminotransferase family. BioF subfamily. In terms of assembly, homodimer. Mg(2+) is required as a cofactor. The cofactor is pyridoxal 5'-phosphate.

It carries out the reaction heptanedioate + ATP + CoA = 6-carboxyhexanoyl-CoA + AMP + diphosphate. The catalysed reaction is 6-carboxyhexanoyl-[ACP] + L-alanine + H(+) = (8S)-8-amino-7-oxononanoate + holo-[ACP] + CO2. The protein operates within metabolic intermediate metabolism; pimeloyl-CoA biosynthesis; pimeloyl-CoA from pimelate: step 1/1. It functions in the pathway cofactor biosynthesis; biotin biosynthesis. Catalyzes both the decarboxylative condensation of pimeloyl-[acyl-carrier protein] and L-alanine to produce 8-amino-7-oxononanoate (AON), [acyl-carrier protein], and carbon dioxide, and the transformation of pimelate into pimeloyl-CoA with concomitant hydrolysis of ATP to AMP. The protein is Biotin biosynthesis bifunctional protein BioWF of Cutibacterium acnes (strain DSM 16379 / KPA171202) (Propionibacterium acnes).